Reading from the N-terminus, the 249-residue chain is Ubiquinone biosynthesis protein COQ4 homolog, mitochondrial (249 aa).

The Zn(2+) site is built by H134, D135, H138, and E150.

The protein belongs to the COQ4 family. In terms of assembly, component of a multi-subunit COQ enzyme complex. It depends on Zn(2+) as a cofactor.

It is found in the mitochondrion inner membrane. It catalyses the reaction a 4-hydroxy-3-methoxy-5-(all-trans-polyprenyl)benzoate + H(+) = a 2-methoxy-6-(all-trans-polyprenyl)phenol + CO2. The protein operates within cofactor biosynthesis; ubiquinone biosynthesis. Lyase that catalyzes the C1-decarboxylation of 4-hydroxy-3-methoxy-5-(all-trans-polyprenyl)benzoic acid into 2-methoxy-6-(all-trans-polyprenyl)phenol during ubiquinone biosynthesis. The chain is Ubiquinone biosynthesis protein COQ4 homolog, mitochondrial from Trypanosoma brucei brucei (strain 927/4 GUTat10.1).